A 689-amino-acid chain; its full sequence is DNA polymerase epsilon subunit B (689 aa).

Over residues 98–115 (EWSHEHPIQHEENILGRT) the composition is skewed to basic and acidic residues. Positions 98–155 (EWSHEHPIQHEENILGRTDDDENNSDDEMPIAADSSLQNVSLSSPMRQPTERDEYKQP) are disordered. A compositionally biased stretch (acidic residues) spans 116–126 (DDDENNSDDEM). Ser122 is modified (phosphoserine). The span at 132-144 (SSLQNVSLSSPMR) shows a compositional bias: polar residues. A Phosphoserine; by CDC28 modification is found at Ser141. Over residues 146 to 155 (PTERDEYKQP) the composition is skewed to basic and acidic residues. At Ser613 the chain carries Phosphoserine.

It belongs to the DNA polymerase epsilon subunit B family. DNA polymerase epsilon is a heterotetramer consisting of POL2, DPB2, DPB3 and DPB4. Post-translationally, phosphorylated in a cell cycle dependent manner during late G1 phase. Phosphorylation may facilitate the interaction with POL2 or the activity of DNA polymerase II. Phosphorylation is independent of DNA replication but dependent upon CDC28 in vivo. Both Ser-141 and Ser-613 are phosphorylated in vivo, but in vitro only Ser-141 is phosphorylated by CDC28.

The protein localises to the cytoplasm. It is found in the nucleus. Functionally, as accessory component of the DNA polymerase epsilon complex participates in chromosomal DNA replication. It is required during synthesis of the leading and lagging DNA strands at the replication fork and binds at/or near replication origins and moves along DNA with the replication fork. It has 3'-5' proofreading exonuclease activity that correct errors arising during DNA replication. It is also involved in DNA synthesis during DNA repair. The sequence is that of DNA polymerase epsilon subunit B (DPB2) from Saccharomyces cerevisiae (strain ATCC 204508 / S288c) (Baker's yeast).